The following is a 38-amino-acid chain: Trypsin inhibitor DE5 beta chain (38 aa).

The protein belongs to the protease inhibitor I3 (leguminous Kunitz-type inhibitor) family. Heterodimer of an alpha and a beta chain linked by a disulfide bond.

Inhibition of trypsin. This is Trypsin inhibitor DE5 beta chain from Adenanthera pavonina (Sandal bead tree).